The primary structure comprises 419 residues: Acyl transferase 9 (419 aa).

Catalysis depends on proton acceptor residues H161 and D362.

The protein belongs to the plant acyltransferase family.

In terms of biological role, involved in the incorporation of ferulate into the cell wall. May act as arabinoxylan feruloyl transferase. This Oryza sativa subsp. japonica (Rice) protein is Acyl transferase 9.